Consider the following 520-residue polypeptide: Cytosol aminopeptidase (520 aa).

Positions 286 and 291 each coordinate Zn(2+). Residue Lys298 is part of the active site. Positions 309, 368, and 370 each coordinate Zn(2+). Residue Arg372 is part of the active site.

Belongs to the peptidase M17 family. Homohexamer. Zn(2+) serves as cofactor.

The protein localises to the cytoplasm. The catalysed reaction is Release of an N-terminal amino acid, Xaa-|-Yaa-, in which Xaa is preferably Leu, but may be other amino acids including Pro although not Arg or Lys, and Yaa may be Pro. Amino acid amides and methyl esters are also readily hydrolyzed, but rates on arylamides are exceedingly low.. It catalyses the reaction Release of N-terminal proline from a peptide.. Functionally, presumably involved in the processing and regular turnover of intracellular proteins. Catalyzes the removal of unsubstituted N-terminal amino acids from various peptides. This chain is Cytosol aminopeptidase (lap), found in Dictyostelium discoideum (Social amoeba).